The sequence spans 138 residues: DNA-directed RNA polymerase subunit omega (138 aa).

The tract at residues 104–138 is disordered; the sequence is GNSDGLENSSNSRDDNPLGRDNFFSTPENRNNTNS. Residues 126 to 138 show a composition bias toward polar residues; sequence FFSTPENRNNTNS.

It belongs to the RNA polymerase subunit omega family. The RNAP catalytic core consists of 2 alpha, 1 beta, 1 beta' and 1 omega subunit. When a sigma factor is associated with the core the holoenzyme is formed, which can initiate transcription.

The catalysed reaction is RNA(n) + a ribonucleoside 5'-triphosphate = RNA(n+1) + diphosphate. Its function is as follows. Promotes RNA polymerase assembly. Latches the N- and C-terminal regions of the beta' subunit thereby facilitating its interaction with the beta and alpha subunits. In Ehrlichia chaffeensis (strain ATCC CRL-10679 / Arkansas), this protein is DNA-directed RNA polymerase subunit omega.